The following is a 69-amino-acid chain: Protein transport protein Sec61 subunit gamma-3 (69 aa).

Met1 bears the N-acetylmethionine mark. At 1-32 the chain is on the cytoplasmic side; that stretch reads MEAIDSAIDPLRDFAKSSVRLVQRCHKPDRKE. Residues 33–61 traverse the membrane as a helical segment; it reads FTKVAVRTAIGFVVMGFVGFFVKLVFIPI. The Extracellular portion of the chain corresponds to 62 to 69; sequence NNIIVGSS.

It belongs to the SecE/SEC61-gamma family. As to quaternary structure, heterotrimeric complex composed of SEC61-alpha, SEC61-beta and SEC61-gamma.

The protein localises to the endoplasmic reticulum membrane. Necessary for protein translocation in the endoplasmic reticulum. The chain is Protein transport protein Sec61 subunit gamma-3 (SEC61G3) from Arabidopsis thaliana (Mouse-ear cress).